The following is a 307-amino-acid chain: Aspartate carbamoyltransferase catalytic subunit (307 aa).

The carbamoyl phosphate site is built by Arg55 and Thr56. L-aspartate is bound at residue Lys85. Carbamoyl phosphate-binding residues include Arg106, His134, and Gln137. Residues Arg167 and Arg228 each contribute to the L-aspartate site. Leu266 and Pro267 together coordinate carbamoyl phosphate.

It belongs to the aspartate/ornithine carbamoyltransferase superfamily. ATCase family. Heterododecamer (2C3:3R2) of six catalytic PyrB chains organized as two trimers (C3), and six regulatory PyrI chains organized as three dimers (R2).

The enzyme catalyses carbamoyl phosphate + L-aspartate = N-carbamoyl-L-aspartate + phosphate + H(+). It participates in pyrimidine metabolism; UMP biosynthesis via de novo pathway; (S)-dihydroorotate from bicarbonate: step 2/3. Catalyzes the condensation of carbamoyl phosphate and aspartate to form carbamoyl aspartate and inorganic phosphate, the committed step in the de novo pyrimidine nucleotide biosynthesis pathway. The protein is Aspartate carbamoyltransferase catalytic subunit of Tolumonas auensis (strain DSM 9187 / NBRC 110442 / TA 4).